Reading from the N-terminus, the 133-residue chain is Small ribosomal subunit protein uS8 (133 aa).

This sequence belongs to the universal ribosomal protein uS8 family. Part of the 30S ribosomal subunit. Contacts proteins S5 and S12.

Its function is as follows. One of the primary rRNA binding proteins, it binds directly to 16S rRNA central domain where it helps coordinate assembly of the platform of the 30S subunit. In Prochlorococcus marinus (strain MIT 9301), this protein is Small ribosomal subunit protein uS8.